The chain runs to 299 residues: Acetaldehyde dehydrogenase 2 (299 aa).

Cysteine 130 acts as the Acyl-thioester intermediate in catalysis. NAD(+) contacts are provided by residues 161–169 and asparagine 272; that span reads SVGPGTRKN.

It belongs to the acetaldehyde dehydrogenase family.

The catalysed reaction is acetaldehyde + NAD(+) + CoA = acetyl-CoA + NADH + H(+). In Burkholderia lata (strain ATCC 17760 / DSM 23089 / LMG 22485 / NCIMB 9086 / R18194 / 383), this protein is Acetaldehyde dehydrogenase 2.